A 268-amino-acid chain; its full sequence is Imidazole glycerol phosphate synthase subunit HisF (268 aa).

Catalysis depends on residues Asp-12 and Asp-131.

It belongs to the HisA/HisF family. In terms of assembly, heterodimer of HisH and HisF.

Its subcellular location is the cytoplasm. The catalysed reaction is 5-[(5-phospho-1-deoxy-D-ribulos-1-ylimino)methylamino]-1-(5-phospho-beta-D-ribosyl)imidazole-4-carboxamide + L-glutamine = D-erythro-1-(imidazol-4-yl)glycerol 3-phosphate + 5-amino-1-(5-phospho-beta-D-ribosyl)imidazole-4-carboxamide + L-glutamate + H(+). Its pathway is amino-acid biosynthesis; L-histidine biosynthesis; L-histidine from 5-phospho-alpha-D-ribose 1-diphosphate: step 5/9. Its function is as follows. IGPS catalyzes the conversion of PRFAR and glutamine to IGP, AICAR and glutamate. The HisF subunit catalyzes the cyclization activity that produces IGP and AICAR from PRFAR using the ammonia provided by the HisH subunit. The protein is Imidazole glycerol phosphate synthase subunit HisF of Salinibacter ruber (strain DSM 13855 / M31).